Here is a 109-residue protein sequence, read N- to C-terminus: Flagellar hook-basal body complex protein FliE (109 aa).

The interval 1–38 (MQAIHNDKSLLSPFSELNTDNRTQREESGSTFKEQKGG) is disordered. Basic and acidic residues predominate over residues 22-38 (RTQREESGSTFKEQKGG).

Belongs to the FliE family.

Its subcellular location is the bacterial flagellum basal body. The sequence is that of Flagellar hook-basal body complex protein FliE from Helicobacter acinonychis (strain Sheeba).